Here is a 343-residue protein sequence, read N- to C-terminus: Calcium/calmodulin-dependent protein kinase type 1B (343 aa).

A Protein kinase domain is found at 15–270 (YEIREKLGSG…CQQALQHLWI (256 aa)). Residues 21 to 29 (LGSGAFSEV) and lysine 44 each bind ATP. Residue aspartate 136 is the Proton acceptor of the active site. The calmodulin-binding stretch occupies residues 290-311 (KNFARTHWKRAFNATSFLRHIR). A disordered region spans residues 314–343 (GQSPEGEEASRQGMTRHSHPGLGTSQSPKW). Serine 338 bears the Phosphoserine mark.

The protein belongs to the protein kinase superfamily. CAMK Ser/Thr protein kinase family. CaMK subfamily. Isoform 1 and isoform 2 are phosphorylated by CAMKK1. As to expression, isoform 1 is expressed in liver, heart, lung, kidney, spleen and testis. Isoform 2 is predominantly expressed in cerebrum and cerebellum.

The protein resides in the cytoplasm. The protein localises to the nucleus. It carries out the reaction L-seryl-[protein] + ATP = O-phospho-L-seryl-[protein] + ADP + H(+). It catalyses the reaction L-threonyl-[protein] + ATP = O-phospho-L-threonyl-[protein] + ADP + H(+). Activated by Ca(2+)/calmodulin. Must be phosphorylated to be maximally active. Activated by CAMKK1. In terms of biological role, calcium/calmodulin-dependent protein kinase belonging to a proposed calcium-triggered signaling cascade. In vitro, isoform 1 and isoform 2 phosphorylate CREB1, SYN1/synapsin I. Phosphorylates and activates CAMK1. This is Calcium/calmodulin-dependent protein kinase type 1B (Pnck) from Rattus norvegicus (Rat).